Consider the following 2222-residue polypeptide: Protein SWEETIE (2222 aa).

HEAT repeat units lie at residues 37–75, 228–265, 331–368, 510–540, 541–578, 611–648, 768–807, 898–936, 968–1008, and 1029–1066; these read LLCF…LVTL, SEFD…LGMH, SELQ…GVID, PARL…SEKE, AGWL…GNPE, CNDG…LVDI, QGML…GLKA, MALS…TIEA, QGIG…WQEI, and VSVH…KDPV. A disordered region spans residues 1133–1165; the sequence is IAENDPAYTRENLGDDDEDMVSSSSGKSIRANP. HEAT repeat units lie at residues 1238-1269, 1270-1306, 1312-1354, 1372-1410, 1434-1474, 1550-1586, 1783-1820, 1836-1874, 1880-1917, and 1966-2006; these read MRPI…LLEQ, YQAQ…TSGI, VAVK…AHAS, VEFE…NLKK, EAWP…LEAE, DLCQ…NCPK, VMLK…RYNN, GDIV…HSIT, GFMS…LVSH, and AMDI…QVST. Positions 1992–2203 are disordered; that stretch reads EALSTMPTSF…DESSKEHVGA (212 aa). Residues 1996-2009 show a composition bias toward polar residues; it reads TMPTSFNQVSTVES. Residues 2010 to 2027 are compositionally biased toward acidic residues; that stretch reads GTDEEEEEEEDDDDDDWD. Over residues 2028–2040 the composition is skewed to polar residues; it reads TFQSFPASTNLEG. Over residues 2062–2072 the composition is skewed to acidic residues; it reads QDDESNAEETD. Basic and acidic residues-rich tracts occupy residues 2073–2096 and 2108–2124; these read DQHL…SKEV and TRED…EETV. Residues 2150-2164 show a composition bias toward polar residues; the sequence is NEQSVESKNLESENI. Basic and acidic residues predominate over residues 2191 to 2202; it reads SPEDESSKEHVG.

It belongs to the HEATR5 family.

Its function is as follows. May regulate multiple metabolic, hormonal and stress-related pathways. Required for carbohydrate metabolism and homoeostasis. May also monitor ethylene biosynthesis and senescence. The sequence is that of Protein SWEETIE from Arabidopsis thaliana (Mouse-ear cress).